Reading from the N-terminus, the 590-residue chain is Putative sodium/calcium exchanger 6 (590 aa).

The signal sequence occupies residues 1–19 (MRIHFFAFLIILSLVGCDG). 11 consecutive transmembrane segments (helical) span residues 97–117 (IILIITGVIYMLVLFIMVSSA), 139–159 (VAGVTFMAFGNGAPDVFGAIA), 173–193 (LGELFGAGLFVTTMVLAVTIF), 208–228 (IAFYLVALAFLAFCFVYYDHV), 230–250 (IWMPITFLGVYLIYVCTVILS), 368–388 (PITLLQCLICPVFLLFCIQVC), 397–417 (PGLWMYGLILSVLLTAAVLFF), 440–460 (IAWIYLISSEVVNVVTMLGVV), 499–519 (AAAIGGQLFNLLIGFGLPFTI), 535–555 (YRLLMLFLAISLIFTLIAMFA), and 568–588 (LVFIYISFFVFIGLSLDDILV).

It belongs to the Ca(2+):cation antiporter (CaCA) (TC 2.A.19) family.

The protein localises to the membrane. The protein is Putative sodium/calcium exchanger 6 (ncx-6) of Caenorhabditis elegans.